The sequence spans 137 residues: Small heat shock protein IbpA (137 aa).

Residues 28 to 137 (SQSNGGYPPY…ANKPRRIEIN (110 aa)) form the sHSP domain.

Belongs to the small heat shock protein (HSP20) family. As to quaternary structure, monomer. Forms homomultimers of about 100-150 subunits at optimal growth temperatures. Conformation changes to monomers at high temperatures or high ionic concentrations.

The protein resides in the cytoplasm. In terms of biological role, associates with aggregated proteins, together with IbpB, to stabilize and protect them from irreversible denaturation and extensive proteolysis during heat shock and oxidative stress. Aggregated proteins bound to the IbpAB complex are more efficiently refolded and reactivated by the ATP-dependent chaperone systems ClpB and DnaK/DnaJ/GrpE. Its activity is ATP-independent. The polypeptide is Small heat shock protein IbpA (Klebsiella pneumoniae (strain 342)).